Reading from the N-terminus, the 319-residue chain is NADH-ubiquinone oxidoreductase chain 1 (319 aa).

A run of 8 helical transmembrane segments spans residues 3–23, 74–94, 106–126, 149–169, 175–195, 226–246, 254–274, and 294–314; these read LITL…AMAF, LFLL…IPLP, ILFI…SGWA, TLGL…LTTF, AVWL…STLA, LFFL…TILF, LTIN…FLWV, and FLPL…SMAG.

Belongs to the complex I subunit 1 family.

Its subcellular location is the mitochondrion inner membrane. The catalysed reaction is a ubiquinone + NADH + 5 H(+)(in) = a ubiquinol + NAD(+) + 4 H(+)(out). Core subunit of the mitochondrial membrane respiratory chain NADH dehydrogenase (Complex I) that is believed to belong to the minimal assembly required for catalysis. Complex I functions in the transfer of electrons from NADH to the respiratory chain. The immediate electron acceptor for the enzyme is believed to be ubiquinone. The polypeptide is NADH-ubiquinone oxidoreductase chain 1 (MT-ND1) (Polypterus ornatipinnis (Ornate bichir)).